The following is a 799-amino-acid chain: Cadherin-8 (799 aa).

An N-terminal signal peptide occupies residues 1–29 (MPERLAEMLLDLWTPLIILWITLPPCIYM). Positions 30 to 61 (APMNQSQVLMSGSPLELNSLGEEQRILNRSKR) are excised as a propeptide. Residues Asn33 and Asn57 are each glycosylated (N-linked (GlcNAc...) asparagine). 5 consecutive Cadherin domains span residues 62–167 (GWVW…APEF), 168–276 (LNGP…PPKF), 277–391 (AQSL…PPVF), 392–494 (SSPT…DNAP), and 495–616 (EFAS…YVLP). Residues 62–621 (GWVWNQMFVL…AYVLPIGLSM (560 aa)) are Extracellular-facing. Asn188 is a glycosylation site (N-linked (GlcNAc...) asparagine). Asn463, Asn473, and Asn544 each carry an N-linked (GlcNAc...) asparagine glycan. The helical transmembrane segment at 622-642 (GALIAILACIILLLVIVVLFV) threads the bilayer. The Cytoplasmic portion of the chain corresponds to 643–799 (TLRRHKNEPL…YSVGESDKET (157 aa)). At Ser795 the chain carries Phosphoserine.

As to expression, mainly expressed in brain. Found in certain nerve cell lines, such as retinoblasts, glioma cells and neuroblasts.

Its subcellular location is the cell membrane. Its function is as follows. Cadherins are calcium-dependent cell adhesion proteins. They preferentially interact with themselves in a homophilic manner in connecting cells; cadherins may thus contribute to the sorting of heterogeneous cell types. This chain is Cadherin-8 (CDH8), found in Homo sapiens (Human).